The primary structure comprises 317 residues: Terpene synthase 3 (317 aa).

A DDxx(x)D/E motif motif is present at residues 96 to 101 (DDFYFE). The NDxxSxxxD/E motif motif lies at 223–231 (NDMVSFERE).

Belongs to the terpene synthase family.

In terms of biological role, terpene synthase that converts its substrate farnesyl diphosphate (FPP) into the sesquiterpene CAS 137235-51-9 as a major product. Is also able to convert FPP into 9-epi-(E)-caryophyllene, alpha-neoclovene, beta-neoclovene, and 3 yet unidentified sesquiterpenes. The protein is Terpene synthase 3 of Dictyostelium purpureum (Slime mold).